The chain runs to 267 residues: MDFKYTEEKELIKINNVMIHKYTILYTSNCILDISFGEDKITCFNNRLVFLERGVNISVRIQKQKLTEKPYVAFRLNENVLRHLKNTLMIIYGMSKIDSCECRGVSRKIMTTEVDKMLLNVLREMMGHHNDDSSFISALIYLISKIKCNDKIIESLYMSSITFFTDKVRGVIEKDLSRKWTLAIIADVFNVSEITIRKRLESEDTNFNQILMQSRMSKAALLLLENSYQISQISNMIGISSASYFIRIFNKHFGVTPKQFFNYFKGG.

DNA-binding regions (H-T-H motif) lie at residues 183-204 (AIIA…ESED) and 230-253 (ISQI…NKHF).

In terms of assembly, homodimer.

Transcriptional activator of fimbrial genes in enterotoxigenic E.coli. In Escherichia coli, this protein is HTH-type transcriptional activator CsvR.